The sequence spans 118 residues: Aspartate 1-decarboxylase (118 aa).

The active-site Schiff-base intermediate with substrate; via pyruvic acid is Ser25. Ser25 carries the post-translational modification Pyruvic acid (Ser). Thr57 contacts substrate. Tyr58 (proton donor) is an active-site residue. Residue 73–75 coordinates substrate; that stretch reads GAA.

This sequence belongs to the PanD family. In terms of assembly, heterooctamer of four alpha and four beta subunits. Pyruvate is required as a cofactor. In terms of processing, is synthesized initially as an inactive proenzyme, which is activated by self-cleavage at a specific serine bond to produce a beta-subunit with a hydroxyl group at its C-terminus and an alpha-subunit with a pyruvoyl group at its N-terminus.

The protein resides in the cytoplasm. It carries out the reaction L-aspartate + H(+) = beta-alanine + CO2. The protein operates within cofactor biosynthesis; (R)-pantothenate biosynthesis; beta-alanine from L-aspartate: step 1/1. Catalyzes the pyruvoyl-dependent decarboxylation of aspartate to produce beta-alanine. The polypeptide is Aspartate 1-decarboxylase (Leptospira biflexa serovar Patoc (strain Patoc 1 / Ames)).